A 196-amino-acid polypeptide reads, in one-letter code: Ribosome maturation factor RimP (196 aa).

The segment at 164–196 is disordered; it reads LAPQKPNKPGPKKPGHDKKKPSNEPAAGKPRAE. A compositionally biased stretch (basic residues) spans 173–182; the sequence is GPKKPGHDKK.

Belongs to the RimP family.

The protein resides in the cytoplasm. Required for maturation of 30S ribosomal subunits. The polypeptide is Ribosome maturation factor RimP (Xanthomonas campestris pv. campestris (strain B100)).